A 300-amino-acid polypeptide reads, in one-letter code: E3 ubiquitin-protein ligase RNF212B (300 aa).

The RING-type zinc finger occupies 6 to 40; the sequence is CNQCFRKDGAHFFVTSCGHIFCKKCVTLEKCAVCG. Residues 88-124 adopt a coiled-coil conformation; that stretch reads LIAFYKHRITKLETAMQETQQALVSQDKELSVLRKEN. Disordered regions lie at residues 141 to 251 and 280 to 300; these read YQGS…HTRV and PYQQ…TTSR. The segment covering 155-169 has biased composition (polar residues); sequence TSPSQSVTPRPSFQH. Low complexity predominate over residues 170–183; it reads SSQVVSRSSSVESV. Residues 191-200 are compositionally biased toward gly residues; sequence GSLGQGGRGL. Residues 211 to 234 are compositionally biased toward polar residues; it reads NETPSPASTHSLSYRPSSASSGQG.

As to quaternary structure, homodimer. In terms of processing, autoubiquitinated.

The protein resides in the chromosome. It carries out the reaction S-ubiquitinyl-[E2 ubiquitin-conjugating enzyme]-L-cysteine + [acceptor protein]-L-lysine = [E2 ubiquitin-conjugating enzyme]-L-cysteine + N(6)-ubiquitinyl-[acceptor protein]-L-lysine.. The protein operates within protein modification; protein ubiquitination. Its function is as follows. Ubiquitin E3 ligase that acts as a crucial factor for crossing-over (CO) formation during meiosis. Essential for normal prophase I progression and for ensuring appropriate CO designation in meiosis. Recruits key components of the cross-over machinery either directly ou indirectly, leading to the activation of the MutL-gamma complex. The function of RNF212B in CO designation is dependent on its catalytic activity. The sequence is that of E3 ubiquitin-protein ligase RNF212B (RNF212B) from Pongo abelii (Sumatran orangutan).